Consider the following 205-residue polypeptide: Thiamine-phosphate synthase (205 aa).

Residues 37-41 (QVREK) and asparagine 69 contribute to the 4-amino-2-methyl-5-(diphosphooxymethyl)pyrimidine site. The Mg(2+) site is built by aspartate 70 and aspartate 89. Serine 108 provides a ligand contact to 4-amino-2-methyl-5-(diphosphooxymethyl)pyrimidine. 134–136 (TGS) is a 2-[(2R,5Z)-2-carboxy-4-methylthiazol-5(2H)-ylidene]ethyl phosphate binding site. Lysine 137 is a binding site for 4-amino-2-methyl-5-(diphosphooxymethyl)pyrimidine. 2-[(2R,5Z)-2-carboxy-4-methylthiazol-5(2H)-ylidene]ethyl phosphate-binding positions include glycine 165 and 185–186 (IS).

Belongs to the thiamine-phosphate synthase family. Requires Mg(2+) as cofactor.

It carries out the reaction 2-[(2R,5Z)-2-carboxy-4-methylthiazol-5(2H)-ylidene]ethyl phosphate + 4-amino-2-methyl-5-(diphosphooxymethyl)pyrimidine + 2 H(+) = thiamine phosphate + CO2 + diphosphate. The catalysed reaction is 2-(2-carboxy-4-methylthiazol-5-yl)ethyl phosphate + 4-amino-2-methyl-5-(diphosphooxymethyl)pyrimidine + 2 H(+) = thiamine phosphate + CO2 + diphosphate. It catalyses the reaction 4-methyl-5-(2-phosphooxyethyl)-thiazole + 4-amino-2-methyl-5-(diphosphooxymethyl)pyrimidine + H(+) = thiamine phosphate + diphosphate. It participates in cofactor biosynthesis; thiamine diphosphate biosynthesis; thiamine phosphate from 4-amino-2-methyl-5-diphosphomethylpyrimidine and 4-methyl-5-(2-phosphoethyl)-thiazole: step 1/1. In terms of biological role, condenses 4-methyl-5-(beta-hydroxyethyl)thiazole monophosphate (THZ-P) and 2-methyl-4-amino-5-hydroxymethyl pyrimidine pyrophosphate (HMP-PP) to form thiamine monophosphate (TMP). This is Thiamine-phosphate synthase from Clostridium botulinum (strain Loch Maree / Type A3).